Here is a 248-residue protein sequence, read N- to C-terminus: PF03932 family protein CutC (248 aa).

The protein belongs to the CutC family. In terms of assembly, homodimer.

The protein resides in the cytoplasm. This chain is PF03932 family protein CutC, found in Escherichia coli O139:H28 (strain E24377A / ETEC).